A 296-amino-acid chain; its full sequence is Phosphoribosylaminoimidazole-succinocarboxamide synthase (296 aa).

The protein belongs to the SAICAR synthetase family.

It carries out the reaction 5-amino-1-(5-phospho-D-ribosyl)imidazole-4-carboxylate + L-aspartate + ATP = (2S)-2-[5-amino-1-(5-phospho-beta-D-ribosyl)imidazole-4-carboxamido]succinate + ADP + phosphate + 2 H(+). It functions in the pathway purine metabolism; IMP biosynthesis via de novo pathway; 5-amino-1-(5-phospho-D-ribosyl)imidazole-4-carboxamide from 5-amino-1-(5-phospho-D-ribosyl)imidazole-4-carboxylate: step 1/2. The chain is Phosphoribosylaminoimidazole-succinocarboxamide synthase from Geotalea uraniireducens (strain Rf4) (Geobacter uraniireducens).